A 105-amino-acid chain; its full sequence is Large ribosomal subunit protein bL21 (105 aa).

The protein belongs to the bacterial ribosomal protein bL21 family. In terms of assembly, part of the 50S ribosomal subunit. Contacts protein L20.

Functionally, this protein binds to 23S rRNA in the presence of protein L20. This Desulfatibacillum aliphaticivorans protein is Large ribosomal subunit protein bL21.